A 127-amino-acid polypeptide reads, in one-letter code: Large ribosomal subunit protein bL19 (127 aa).

This sequence belongs to the bacterial ribosomal protein bL19 family.

This protein is located at the 30S-50S ribosomal subunit interface and may play a role in the structure and function of the aminoacyl-tRNA binding site. The protein is Large ribosomal subunit protein bL19 of Cupriavidus pinatubonensis (strain JMP 134 / LMG 1197) (Cupriavidus necator (strain JMP 134)).